The chain runs to 324 residues: Viral cathepsin (324 aa).

The signal sequence occupies residues 1–16; sequence MNKIVLYLLVYGATLG. Positions 17 to 113 are cleaved as a propeptide — activation peptide; it reads AAYDLLKAPS…VVLDRPPDKG (97 aa). 3 disulfide bridges follow: Cys134/Cys175, Cys168/Cys208, and Cys263/Cys311. Residue Cys137 is part of the active site. N-linked (GlcNAc...) asparagine; by host glycosylation occurs at Asn159. Residues His270 and Asn290 contribute to the active site.

Belongs to the peptidase C1 family. In terms of processing, synthesized as an inactive proenzyme and activated by proteolytic removal of the inhibitory propeptide.

The enzyme catalyses Endopeptidase of broad specificity, hydrolyzing substrates of both cathepsin L and cathepsin B.. Cysteine protease that plays an essential role in host liquefaction to facilitate horizontal transmission of the virus. May participate in the degradation of foreign protein expressed by the baculovirus system. In Antheraea pernyi nuclear polyhedrosis virus (ApNPV), this protein is Viral cathepsin (VCATH).